The primary structure comprises 202 residues: Peptide methionine sulfoxide reductase A3 (202 aa).

Residues 1-34 (MNILNRLGLGSSGQTNMDPSPIAQGNDDDTPAPG) form a disordered region. Ser189 carries the post-translational modification Phosphoserine.

The protein belongs to the MsrA Met sulfoxide reductase family. In terms of tissue distribution, expressed in rosette and cauline leaves, and at lower levels in roots, stems and flowers (at protein level).

The protein localises to the cytoplasm. It is found in the cytosol. The enzyme catalyses L-methionyl-[protein] + [thioredoxin]-disulfide + H2O = L-methionyl-(S)-S-oxide-[protein] + [thioredoxin]-dithiol. It catalyses the reaction [thioredoxin]-disulfide + L-methionine + H2O = L-methionine (S)-S-oxide + [thioredoxin]-dithiol. Functionally, catalyzes the reduction of methionine sulfoxide (MetSO) to methionine in proteins. Plays a protective role against oxidative stress by restoring activity to proteins that have been inactivated by methionine oxidation. May prevent cellular oxidative damage due to light exposure. MSRA family specifically reduces the MetSO S-enantiomer. This chain is Peptide methionine sulfoxide reductase A3 (MSRA3), found in Arabidopsis thaliana (Mouse-ear cress).